Reading from the N-terminus, the 72-residue chain is MAQQSRSRSNNNNDLLIPQAASAIEQMKLEIASEFGVQLGAETTSRANGSVGGEITKRLVRLAQQNMGGQFH.

It belongs to the alpha/beta-type SASP family.

In terms of biological role, SASP are bound to spore DNA. They are double-stranded DNA-binding proteins that cause DNA to change to an a-like conformation. They protect the DNA backbone from chemical and enzymatic cleavage and are thus involved in dormant spore's high resistance to UV light. This Bacillus subtilis (strain 168) protein is Small, acid-soluble spore protein C (sspC).